The chain runs to 295 residues: Ribosomal protein L11 methyltransferase (295 aa).

The S-adenosyl-L-methionine site is built by threonine 145, glycine 166, aspartate 188, and asparagine 230.

It belongs to the methyltransferase superfamily. PrmA family.

It is found in the cytoplasm. The enzyme catalyses L-lysyl-[protein] + 3 S-adenosyl-L-methionine = N(6),N(6),N(6)-trimethyl-L-lysyl-[protein] + 3 S-adenosyl-L-homocysteine + 3 H(+). Its function is as follows. Methylates ribosomal protein L11. This is Ribosomal protein L11 methyltransferase from Haemophilus influenzae (strain PittEE).